The primary structure comprises 554 residues: Estrogen receptor beta (554 aa).

The interval T25 to F173 is modulating. 2 NR C4-type zinc fingers span residues C174–C194 and C210–C234. The nuclear receptor DNA-binding region spans C174–M239. Residues S289–H521 enclose the NR LBD domain. The tract at residues P529–Q554 is disordered.

It belongs to the nuclear hormone receptor family. NR3 subfamily. As to quaternary structure, binds DNA as a homodimer. Can form a heterodimer with ER-alpha. In terms of tissue distribution, brain, pituitary, skeletal muscle, liver, adrenal, kidney, intestine and ovary.

It is found in the nucleus. In terms of biological role, binds estrogens with an affinity similar to that of ER-alpha, and activates expression of reporter genes containing estrogen response elements (ERE) in an estrogen-dependent manner. Locally synthesized estrogens may act via ER beta, in addition to ER alpha, to mediate seasonal or developmental effects on nearby song nuclei. The chain is Estrogen receptor beta (ESR2) from Sturnus vulgaris (Starling).